A 245-amino-acid polypeptide reads, in one-letter code: Probable phosphatase YcdX (245 aa).

Zn(2+) contacts are provided by His-7, His-9, His-15, His-40, Glu-73, His-101, His-131, Asp-192, and His-194.

Belongs to the PHP family. As to quaternary structure, homotrimer. Zn(2+) is required as a cofactor.

This Escherichia coli O81 (strain ED1a) protein is Probable phosphatase YcdX.